We begin with the raw amino-acid sequence, 214 residues long: Riboflavin kinase (214 aa).

Residues 1–91 (MRSIMEVETL…YCSIFEDGGA (91 aa)) form an H-T-H motif-like region. Residues 92–214 (PVMRGKVVTG…DGDEVEVTLE (123 aa)) form a riboflavin kinase region. 101–106 (GLGEGQ) is a binding site for CDP. Mg(2+)-binding residues include T130 and N132. Positions 182 and 190 each coordinate FMN. 195–198 (IKLR) serves as a coordination point for CDP.

It belongs to the archaeal riboflavin kinase family. Requires Mg(2+) as cofactor.

It carries out the reaction riboflavin + CTP = CDP + FMN + H(+). It functions in the pathway cofactor biosynthesis; FMN biosynthesis; FMN from riboflavin (CTP route): step 1/1. Catalyzes the CTP-dependent phosphorylation of riboflavin (vitamin B2) to form flavin mononucleotide (FMN). This chain is Riboflavin kinase (ribK), found in Methanocella arvoryzae (strain DSM 22066 / NBRC 105507 / MRE50).